A 103-amino-acid polypeptide reads, in one-letter code: Large ribosomal subunit protein bL21 (103 aa).

It belongs to the bacterial ribosomal protein bL21 family. In terms of assembly, part of the 50S ribosomal subunit. Contacts protein L20.

Its function is as follows. This protein binds to 23S rRNA in the presence of protein L20. In Ralstonia nicotianae (strain ATCC BAA-1114 / GMI1000) (Ralstonia solanacearum), this protein is Large ribosomal subunit protein bL21.